The primary structure comprises 159 residues: Small ribosomal subunit protein uS9 (159 aa).

The protein belongs to the universal ribosomal protein uS9 family.

In Rickettsia peacockii (strain Rustic), this protein is Small ribosomal subunit protein uS9.